Reading from the N-terminus, the 635-residue chain is Rab11 family-interacting protein 4 (635 aa).

One can recognise an EF-hand domain in the interval 49-84 (GQGEEVEKLVKCLDPNDLGRINFKDFCRGVFAMKGC). Positions 62, 64, 68, and 73 each coordinate Ca(2+). Residues 82-635 (KGCEELLKDV…HNPSILEIKH (554 aa)) form a necessary for interaction with RAB11A, subcellular location, homo- or heterooligomerization region. Disordered regions lie at residues 147-176 (GPQELDMDSPMESSQGPEGSVKGCGEEKEP) and 216-258 (EDYG…QTPR). The span at 216–225 (EDYGEGDDVD) shows a compositional bias: acidic residues. The stretch at 279-615 (KINLLNDLEA…EEINFRLRQY (337 aa)) forms a coiled coil. In terms of domain architecture, FIP-RBD spans 572–634 (EAKNLFATQT…DHNPSILEIK (63 aa)).

Homodimer. Forms a complex with Rab11 (RAB11A or RAB11B) and ARF6. Interacts with RAB11A; the interaction is direct. Forms a heterooligomeric complex with RAB11FIP2, RAB11FIP3 and RAB11FIP5. Interacts with ECPAS. As to expression, strongly expressed in the developing retina. Expressed predominantly in neural tissues.

The protein resides in the recycling endosome membrane. Its subcellular location is the cleavage furrow. It is found in the midbody. It localises to the cytoplasmic vesicle. Acts as a regulator of endocytic traffic by participating in membrane delivery. Required for the abscission step in cytokinesis, possibly by acting as an 'address tag' delivering recycling endosome membranes to the cleavage furrow during late cytokinesis. May play a role in differentiation during retinal development, in a Rab11-independent manner. This Mus musculus (Mouse) protein is Rab11 family-interacting protein 4 (Rab11fip4).